The chain runs to 485 residues: Cysteine--tRNA ligase (485 aa).

C28 is a binding site for Zn(2+). Positions 30–40 (MTVYDLCHVGH) match the 'HIGH' region motif. Positions 209, 234, and 238 each coordinate Zn(2+). A 'KMSKS' region motif is present at residues 266 to 270 (KMSKS). K269 contributes to the ATP binding site.

The protein belongs to the class-I aminoacyl-tRNA synthetase family. As to quaternary structure, monomer. Zn(2+) is required as a cofactor.

The protein localises to the cytoplasm. The catalysed reaction is tRNA(Cys) + L-cysteine + ATP = L-cysteinyl-tRNA(Cys) + AMP + diphosphate. The protein is Cysteine--tRNA ligase of Nitrosococcus oceani (strain ATCC 19707 / BCRC 17464 / JCM 30415 / NCIMB 11848 / C-107).